The sequence spans 716 residues: 1,4-alpha-glucan branching enzyme GlgB (716 aa).

The active-site Nucleophile is the Asp398. Glu451 serves as the catalytic Proton donor.

It belongs to the glycosyl hydrolase 13 family. GlgB subfamily. As to quaternary structure, monomer.

The catalysed reaction is Transfers a segment of a (1-&gt;4)-alpha-D-glucan chain to a primary hydroxy group in a similar glucan chain.. The protein operates within glycan biosynthesis; glycogen biosynthesis. Catalyzes the formation of the alpha-1,6-glucosidic linkages in glycogen by scission of a 1,4-alpha-linked oligosaccharide from growing alpha-1,4-glucan chains and the subsequent attachment of the oligosaccharide to the alpha-1,6 position. This Nitrobacter hamburgensis (strain DSM 10229 / NCIMB 13809 / X14) protein is 1,4-alpha-glucan branching enzyme GlgB.